The sequence spans 336 residues: MKGKFLKVSSLFVATLTTATLVSSPAANALSSKAMDNHPQQTQSSKQQTPKIQKGGNLKPLEQREHANVILPNNDRHQITDTTNGHYAPVTYIQVEAPTGTFIASGVVVGKDTLLTNKHVVDATHGDPHALKAFPSAINQDNYPNGGFTAEQITKYSGEGDLAIVKFSPNEQNKHIGEVVKPATMSNNAETQVNQNITVTGYPGDKPVATMWESKGKITYLKGEAMQYDLSTTGGNSGSPVFNEKNEVIGIHWGGVPNEFNGAVFINENVRNFLKQNIEDIHFANDDQPNNPDNPDNPNNPDNPNNPDEPNNPDNPNNPDNPDNGDTNNSDNPDAA.

Residues 1-29 (MKGKFLKVSSLFVATLTTATLVSSPAANA) form the signal peptide. Residues 30-68 (LSSKAMDNHPQQTQSSKQQTPKIQKGGNLKPLEQREHAN) constitute a propeptide that is removed on maturation. The interval 34 to 61 (AMDNHPQQTQSSKQQTPKIQKGGNLKPL) is disordered. Over residues 39–51 (PQQTQSSKQQTPK) the composition is skewed to low complexity. Residues His119, Asp161, and Ser237 each act as charge relay system in the active site. The disordered stretch occupies residues 283 to 336 (FANDDQPNNPDNPDNPNNPDNPNNPDEPNNPDNPNNPDNPDNGDTNNSDNPDAA). Positions 286–336 (DDQPNNPDNPDNPNNPDNPNNPDEPNNPDNPNNPDNPDNGDTNNSDNPDAA) are enriched in low complexity. 11 repeat units span residues 289–291 (PNN), 292–294 (PDN), 295–297 (PDN), 298–300 (PNN), 301–303 (PDN), 304–306 (PNN), 310–312 (PNN), 313–315 (PDN), 316–318 (PNN), 319–321 (PDN), and 322–324 (PDN). The tract at residues 289 to 324 (PNNPDNPDNPNNPDNPNNPDEPNNPDNPNNPDNPDN) is 11 X 3 AA repeats of P-[DN]-N.

Belongs to the peptidase S1B family. Proteolytically cleaved by aureolysin (aur). This cleavage leads to the activation of SspA.

Its subcellular location is the secreted. It carries out the reaction Preferential cleavage: Glu-|-Xaa, Asp-|-Xaa.. Preferentially cleaves peptide bonds on the carboxyl-terminal side of aspartate and glutamate. Along with other extracellular proteases it is involved in colonization and infection of human tissues. Required for proteolytic maturation of thiol protease SspB and inactivation of SspC, an inhibitor of SspB. It is the most important protease for degradation of fibronectin-binding protein (FnBP) and surface protein A, which are involved in adherence to host cells. May also protect bacteria against host defense mechanism by cleaving the immunoglobulin classes IgG, IgA and IgM. May be involved in the stability of secreted lipases. This Staphylococcus aureus (strain COL) protein is Glutamyl endopeptidase (sspA).